The chain runs to 396 residues: Acetate kinase (396 aa).

A Mg(2+)-binding site is contributed by asparagine 8. Lysine 15 contributes to the ATP binding site. Position 89 (arginine 89) interacts with substrate. The active-site Proton donor/acceptor is the aspartate 146. ATP-binding positions include 206–210, 280–282, and 328–332; these read HLGNG, DMR, and GVGEN. Glutamate 382 contacts Mg(2+).

Belongs to the acetokinase family. As to quaternary structure, homodimer. Mg(2+) is required as a cofactor. Requires Mn(2+) as cofactor.

The protein resides in the cytoplasm. It carries out the reaction acetate + ATP = acetyl phosphate + ADP. Its pathway is metabolic intermediate biosynthesis; acetyl-CoA biosynthesis; acetyl-CoA from acetate: step 1/2. Functionally, catalyzes the formation of acetyl phosphate from acetate and ATP. Can also catalyze the reverse reaction. In Clavibacter michiganensis subsp. michiganensis (strain NCPPB 382), this protein is Acetate kinase.